We begin with the raw amino-acid sequence, 167 residues long: RNA pyrophosphohydrolase (167 aa).

The Nudix hydrolase domain maps to P8–R158. The short motif at G49 to G70 is the Nudix box element.

Belongs to the Nudix hydrolase family. RppH subfamily. A divalent metal cation serves as cofactor.

Functionally, accelerates the degradation of transcripts by removing pyrophosphate from the 5'-end of triphosphorylated RNA, leading to a more labile monophosphorylated state that can stimulate subsequent ribonuclease cleavage. The sequence is that of RNA pyrophosphohydrolase from Gluconacetobacter diazotrophicus (strain ATCC 49037 / DSM 5601 / CCUG 37298 / CIP 103539 / LMG 7603 / PAl5).